A 321-amino-acid chain; its full sequence is Putative ribose-phosphate pyrophosphokinase 2 (321 aa).

Residues 43 to 45 and 102 to 103 each bind ATP; these read DGE and RQ. Histidine 136 and aspartate 176 together coordinate Mg(2+). Aspartate 225 lines the D-ribose 5-phosphate pocket.

Belongs to the ribose-phosphate pyrophosphokinase family. Class I subfamily. In terms of assembly, homohexamer. Requires Mg(2+) as cofactor.

Its subcellular location is the cytoplasm. It carries out the reaction D-ribose 5-phosphate + ATP = 5-phospho-alpha-D-ribose 1-diphosphate + AMP + H(+). The protein operates within metabolic intermediate biosynthesis; 5-phospho-alpha-D-ribose 1-diphosphate biosynthesis; 5-phospho-alpha-D-ribose 1-diphosphate from D-ribose 5-phosphate (route I): step 1/1. In terms of biological role, involved in the biosynthesis of the central metabolite phospho-alpha-D-ribosyl-1-pyrophosphate (PRPP) via the transfer of pyrophosphoryl group from ATP to 1-hydroxyl of ribose-5-phosphate (Rib-5-P). This chain is Putative ribose-phosphate pyrophosphokinase 2, found in Lactiplantibacillus plantarum (strain ATCC BAA-793 / NCIMB 8826 / WCFS1) (Lactobacillus plantarum).